Consider the following 230-residue polypeptide: Orotidine 5'-phosphate decarboxylase (230 aa).

Residues D11, K34, D61 to T70, T117, R179, Q188, G208, and R209 contribute to the substrate site. K63 acts as the Proton donor in catalysis.

This sequence belongs to the OMP decarboxylase family. Type 1 subfamily. Homodimer.

The catalysed reaction is orotidine 5'-phosphate + H(+) = UMP + CO2. It functions in the pathway pyrimidine metabolism; UMP biosynthesis via de novo pathway; UMP from orotate: step 2/2. Catalyzes the decarboxylation of orotidine 5'-monophosphate (OMP) to uridine 5'-monophosphate (UMP). This Streptococcus gordonii (strain Challis / ATCC 35105 / BCRC 15272 / CH1 / DL1 / V288) protein is Orotidine 5'-phosphate decarboxylase.